A 112-amino-acid polypeptide reads, in one-letter code: Small ribosomal subunit protein bS16 (112 aa).

It belongs to the bacterial ribosomal protein bS16 family.

The chain is Small ribosomal subunit protein bS16 from Karelsulcia muelleri (strain GWSS) (Sulcia muelleri).